A 1264-amino-acid polypeptide reads, in one-letter code: uncharacterized protein (1264 aa).

Positions 1-18 (MMRKYLILLILLPALAVG) are cleaved as a signal peptide. A helical transmembrane segment spans residues 1215 to 1235 (SYTVLGVVVITILTMSIILCL).

It localises to the host membrane. This is an uncharacterized protein from Ostreid herpesvirus 1 (isolate France) (OsHV-1).